The primary structure comprises 201 residues: Small ribosomal subunit protein uS4 (201 aa).

An S4 RNA-binding domain is found at 91–154 (SRLDNVIYRA…QKMEWFEEAQ (64 aa)).

This sequence belongs to the universal ribosomal protein uS4 family. In terms of assembly, part of the 30S ribosomal subunit. Contacts protein S5. The interaction surface between S4 and S5 is involved in control of translational fidelity.

Its function is as follows. One of the primary rRNA binding proteins, it binds directly to 16S rRNA where it nucleates assembly of the body of the 30S subunit. In terms of biological role, with S5 and S12 plays an important role in translational accuracy. This Corynebacterium aurimucosum (strain ATCC 700975 / DSM 44827 / CIP 107346 / CN-1) (Corynebacterium nigricans) protein is Small ribosomal subunit protein uS4.